We begin with the raw amino-acid sequence, 549 residues long: Tight junction-associated protein 1 (549 aa).

Residues 1–34 are disordered; that stretch reads MSSAAPAKKPYRKAPPEHRELRLEIPVSRLEQEE. A compositionally biased stretch (basic and acidic residues) spans 14 to 23; it reads APPEHRELRL. Residues 42–171 adopt a coiled-coil conformation; it reads MKLLQQENEE…EELNERYRLD (130 aa). Disordered stretches follow at residues 207-226 and 266-322; these read RSGQ…LSPG and VDMS…PLYP. Phosphoserine is present on S295. The segment covering 311–320 has biased composition (pro residues); that stretch reads YPTPSPPHPL. At T313 the chain carries Phosphothreonine. A phosphoserine mark is found at S315 and S340. Disordered stretches follow at residues 359 to 404, 410 to 429, and 434 to 549; these read EDGS…SEED, QRAF…RTAF, and LPEL…TVLS. Over residues 369 to 383 the composition is skewed to polar residues; that stretch reads SVPSSPASAQGSPHH. Residues 389 to 400 are compositionally biased toward low complexity; that stretch reads PSALSAPASSAS. The residue at position 417 (T417) is a Phosphothreonine. Residue S483 is modified to Phosphoserine. The span at 485-498 shows a compositional bias: basic and acidic residues; the sequence is EEERQSLLPDKEGT. A compositionally biased stretch (basic residues) spans 522–534; that stretch reads RSPKRMGVHHLHR. S537 is modified (phosphoserine). The segment covering 538–549 has biased composition (polar residues); that stretch reads LTQAQEQGTVLS.

Interacts with DLG1. Interacts with ARF6 (GTP-bound form). In terms of tissue distribution, widely expressed including in adult thymus, heart, lung, liver, small intestine, kidney, spleen, testis and skeletal muscle and in embryonic brain but not detected in adult brain (at protein level).

The protein localises to the golgi apparatus. It localises to the trans-Golgi network. The protein resides in the cell junction. It is found in the tight junction. Its subcellular location is the cell membrane. Plays a role in regulating the structure of the Golgi apparatus. The polypeptide is Tight junction-associated protein 1 (Mus musculus (Mouse)).